Here is a 559-residue protein sequence, read N- to C-terminus: Tissue-type plasminogen activator (559 aa).

Residues 1–17 (MKGELLCVLLLCGVAFT) form the signal peptide. A propeptide spanning residues 18 to 29 (LPDQGIHRRFRR) is cleaved from the precursor. Residues 30–32 (GAR) constitute a propeptide, removed by plasmin. Residues 36-78 (ATCRDEQTQTTYQQHQSWLRPMLRGNRVEYCRCNSGLAQCHSV) enclose the Fibronectin type-I domain. 17 disulfides stabilise this stretch: cysteine 38–cysteine 68, cysteine 66–cysteine 75, cysteine 83–cysteine 94, cysteine 88–cysteine 105, cysteine 107–cysteine 116, cysteine 124–cysteine 205, cysteine 145–cysteine 187, cysteine 176–cysteine 200, cysteine 213–cysteine 294, cysteine 234–cysteine 276, cysteine 265–cysteine 289, cysteine 297–cysteine 428, cysteine 340–cysteine 356, cysteine 348–cysteine 417, cysteine 442–cysteine 516, cysteine 474–cysteine 490, and cysteine 506–cysteine 534. An important for binding to annexin A2 region spans residues 39-49 (RDEQTQTTYQQ). Residues 79-117 (PVRSCSEPRCFNGGTCQQALYFSDFVCQCPDGFVGKRCD) enclose the EGF-like domain. 2 consecutive Kringle domains span residues 124 to 205 (CFEG…TPAC) and 213 to 294 (CYVG…MSPC). An N-linked (GlcNAc...) asparagine glycan is attached at asparagine 149. The Peptidase S1 domain maps to 309-558 (IKGGLFTDIT…YLNWIQDNMK (250 aa)). Active-site charge relay system residues include histidine 355 and aspartate 404. N-linked (GlcNAc...) asparagine glycosylation occurs at asparagine 481. Serine 510 functions as the Charge relay system in the catalytic mechanism.

The protein belongs to the peptidase S1 family. Heterodimer of chain A and chain B held by a disulfide bond. Binds to fibrin with high affinity. This interaction leads to an increase in the catalytic efficiency of the enzyme due to an increase in affinity for plasminogen. Similarly, binding to heparin increases the activation of plasminogen. Binds to annexin A2, cytokeratin-8, fibronectin and laminin. Binds to mannose receptor and the low-density lipoprotein receptor-related protein (LRP1); these proteins are involved in TPA clearance. Binds LRP1B; binding is followed by internalization and degradation. Forms heterodimer with SERPINA5. Interacts with SERPINE1. In complex with SERPINE1, interacts with SORL1. The single chain, almost fully active enzyme, can be further processed into a two-chain fully active form by a cleavage after Arg-308 catalyzed by plasmin, tissue kallikrein or factor Xa.

The protein localises to the secreted. The protein resides in the extracellular space. The catalysed reaction is Specific cleavage of Arg-|-Val bond in plasminogen to form plasmin.. Its activity is regulated as follows. Inhibited by SERPINA5. Inhibited by SERPINE1. Functionally, converts the abundant, but inactive, zymogen plasminogen to plasmin by hydrolyzing a single Arg-Val bond in plasminogen. By controlling plasmin-mediated proteolysis, it plays an important role in tissue remodeling and degradation, in cell migration and many other physiopathological events. During oocyte activation, plays a role in cortical granule reaction in the zona reaction, which contributes to the block to polyspermy. This Rattus norvegicus (Rat) protein is Tissue-type plasminogen activator (Plat).